The sequence spans 245 residues: ATP synthase subunit a, chloroplastic (245 aa).

5 consecutive transmembrane segments (helical) span residues 34 to 54, 93 to 113, 132 to 152, 197 to 217, and 218 to 238; these read TLMT…LSNL, VPFL…GALL, INTT…AGIS, LVIA…LMLL, and GLFT…AYIG.

It belongs to the ATPase A chain family. F-type ATPases have 2 components, CF(1) - the catalytic core - and CF(0) - the membrane proton channel. CF(1) has five subunits: alpha(3), beta(3), gamma(1), delta(1), epsilon(1). CF(0) has four main subunits: a, b, b' and c.

It is found in the plastid. Its subcellular location is the chloroplast thylakoid membrane. Functionally, key component of the proton channel; it plays a direct role in the translocation of protons across the membrane. This is ATP synthase subunit a, chloroplastic from Bigelowiella natans (Pedinomonas minutissima).